Reading from the N-terminus, the 449-residue chain is Phosphoglucosamine mutase (449 aa).

Serine 104 serves as the catalytic Phosphoserine intermediate. The Mg(2+) site is built by serine 104, aspartate 243, aspartate 245, and aspartate 247. Position 104 is a phosphoserine (serine 104).

The protein belongs to the phosphohexose mutase family. The cofactor is Mg(2+). Activated by phosphorylation.

The catalysed reaction is alpha-D-glucosamine 1-phosphate = D-glucosamine 6-phosphate. In terms of biological role, catalyzes the conversion of glucosamine-6-phosphate to glucosamine-1-phosphate. The polypeptide is Phosphoglucosamine mutase (Xanthomonas axonopodis pv. citri (strain 306)).